We begin with the raw amino-acid sequence, 53 residues long: UPF0391 membrane protein gsr2640 (53 aa).

The next 2 membrane-spanning stretches (helical) occupy residues 4-24 (LLWL…GGVV) and 32-49 (WFLI…FVTG).

Belongs to the UPF0391 family.

The protein resides in the cell membrane. This is UPF0391 membrane protein gsr2640 from Gloeobacter violaceus (strain ATCC 29082 / PCC 7421).